The primary structure comprises 553 residues: Pseudouridylate synthase RPUSD2 (553 aa).

The disordered stretch occupies residues 76 to 135 (AVGKQVPESGDQAQGGEGQLPSNGEQTPAPVADSGKRKKRRGATGERVVPPPKKRRTGVS). Residue Asp287 is part of the active site. A Phosphothreonine modification is found at Thr490.

It belongs to the pseudouridine synthase RluA family.

The enzyme catalyses a uridine in mRNA = a pseudouridine in mRNA. Its function is as follows. Pseudouridine synthase that catalyzes pseudouridylation of mRNAs. In Mus musculus (Mouse), this protein is Pseudouridylate synthase RPUSD2.